Consider the following 144-residue polypeptide: Transcriptional regulator SlyA (144 aa).

Residues 2-135 enclose the HTH marR-type domain; the sequence is ESPLGSDLAR…LLHLIRKLEQ (134 aa). The segment at residues 49–72 is a DNA-binding region (H-T-H motif); it reads QIQLAKAIGIEQPSLVRTLDQLEE.

This sequence belongs to the SlyA family. As to quaternary structure, homodimer.

Functionally, transcription regulator that can specifically activate or repress expression of target genes. The protein is Transcriptional regulator SlyA of Klebsiella pneumoniae (strain 342).